Reading from the N-terminus, the 43-residue chain is Protein PsbN (43 aa).

Residues 5-27 form a helical membrane-spanning segment; sequence NLVAIFVSCLLVSLTGYALYTSF.

The protein belongs to the PsbN family.

Its subcellular location is the plastid. It localises to the chloroplast thylakoid membrane. Functionally, may play a role in photosystem I and II biogenesis. The protein is Protein PsbN of Ephedra sinica (Chinese ephedra).